The sequence spans 428 residues: Peptidase B (428 aa).

Mn(2+)-binding residues include K195 and D200. K207 is an active-site residue. Positions 218, 277, and 279 each coordinate Mn(2+). R281 is a catalytic residue.

It belongs to the peptidase M17 family. In terms of assembly, homohexamer. It depends on Mn(2+) as a cofactor.

It localises to the cytoplasm. It catalyses the reaction Release of an N-terminal amino acid, Xaa, from a peptide or arylamide. Xaa is preferably Glu or Asp but may be other amino acids, including Leu, Met, His, Cys and Gln.. Its function is as follows. Probably plays an important role in intracellular peptide degradation. In Enterobacter sp. (strain 638), this protein is Peptidase B.